The following is a 387-amino-acid chain: S-adenosylmethionine synthase (387 aa).

His19 lines the ATP pocket. Asp21 provides a ligand contact to Mg(2+). Glu47 serves as a coordination point for K(+). Residue Gln103 participates in L-methionine binding. The segment at 103-113 (QSPDIAQGVEL) is flexible loop. Residues 167-169 (DMK), 233-234 (RF), Asp242, 248-249 (RK), Ala265, and Lys269 contribute to the ATP site. L-methionine is bound at residue Asp242. Lys273 provides a ligand contact to L-methionine.

The protein belongs to the AdoMet synthase family. Homotetramer; dimer of dimers. It depends on Mg(2+) as a cofactor. K(+) is required as a cofactor.

The protein localises to the cytoplasm. It carries out the reaction L-methionine + ATP + H2O = S-adenosyl-L-methionine + phosphate + diphosphate. The protein operates within amino-acid biosynthesis; S-adenosyl-L-methionine biosynthesis; S-adenosyl-L-methionine from L-methionine: step 1/1. Catalyzes the formation of S-adenosylmethionine (AdoMet) from methionine and ATP. The overall synthetic reaction is composed of two sequential steps, AdoMet formation and the subsequent tripolyphosphate hydrolysis which occurs prior to release of AdoMet from the enzyme. The polypeptide is S-adenosylmethionine synthase (Mycoplasma mycoides subsp. mycoides SC (strain CCUG 32753 / NCTC 10114 / PG1)).